A 95-amino-acid polypeptide reads, in one-letter code: Protein J1 homolog (95 aa).

The protein belongs to the chordopoxvirinae J1 family. Homodimer. Part of a complex composed of A30, G7, F10 kinase, A15, D2, D3, and J1. Interacts with A45.

It localises to the virion. It is found in the host cytoplasm. Late protein which is a part of a large complex required for early virion morphogenesis. This complex participates in the formation of virosomes and the incorporation of virosomal contents into nascent immature virions. J1 protein is required for DNA packaging during immature virions (IV) formation. The polypeptide is Protein J1 homolog (Sus scrofa (Pig)).